The primary structure comprises 1033 residues: Integrin alpha-IIb (1033 aa).

Residues 1 to 31 form the signal peptide; that stretch reads MARASCAWHSLWLLQWTPLFLGPSAVPPVWA. Topologically, residues 32–988 are extracellular; sequence LNLDSEKFSV…TQLLRALEER (957 aa). FG-GAP repeat units lie at residues 35–96, 109–173, 184–237, 252–304, 305–370, 372–431, and 434–495; these read DSEK…GGKC, NLGF…GRAE, SVYA…ISSY, TYDN…DSYY, QPLH…PQAL, TPTL…GLSP, and SQVL…VQDS. N-linked (GlcNAc...) asparagine glycosylation is found at N46 and N75. 3 disulfides stabilise this stretch: C87–C96, C138–C161, and C177–C197. 19 residues coordinate Ca(2+): E273, D275, D277, T280, E282, D327, N329, D331, R333, D335, D395, D399, Y401, D403, D456, D458, N460, Y462, and D464. Disulfide bonds link C503–C514 and C520–C575. N-linked (GlcNAc...) asparagine glycosylation is present at N600. Intrachain disulfides connect C632/C638, C704/C717, C856/C916, and C905/C911. Residue N710 is glycosylated (N-linked (GlcNAc...) asparagine). Residue N957 is glycosylated (N-linked (GlcNAc...) asparagine). The chain crosses the membrane as a helical span at residues 989-1014; sequence AIPVWWVLVGVLGGLLLLTLLVLAMW. The Cytoplasmic segment spans residues 1015 to 1033; the sequence is KAGFFKRNRPPLEEDEEEE. A GFFKR motif motif is present at residues 1017–1021; sequence GFFKR.

This sequence belongs to the integrin alpha chain family. Heterodimer of an alpha and a beta subunit. The alpha subunit is composed of a heavy and a light chain linked by a disulfide bond. Alpha-IIb associates with beta-3. Directly interacts with RNF181. Interacts (via C-terminus cytoplasmic tail region) with CIB1; the interaction is direct and calcium-dependent. Interacts (via C-terminus cytoplasmic tail region) with CIB2, CIB3 and CIB4; the interactions are stabilized/increased in a calcium and magnesium-dependent manner. ITGA2B:ITGB3 interacts with PPIA/CYPA; the interaction is ROS and PPIase activity-dependent and is increased in the presence of thrombin. ITGA2B:ITGB3 interacts with SELP (via C-type lectin domain); the interaction mediates cell-cell interaction and adhesion. Post-translationally, cleaved by ELANE; the cleavage promotes activation of platelet fibrinogen receptor integrin alpha-IIb/beta-3.

The protein resides in the membrane. Integrin alpha-IIb/beta-3 is a receptor for fibronectin, fibrinogen, plasminogen, prothrombin, thrombospondin and vitronectin. It recognizes the sequence R-G-D in a wide array of ligands. It recognizes the sequence H-H-L-G-G-G-A-K-Q-A-G-D-V in fibrinogen gamma chain. Following activation integrin alpha-IIb/beta-3 brings about platelet/platelet interaction through binding of soluble fibrinogen. This step leads to rapid platelet aggregation which physically plugs ruptured endothelial cell surface. In Mus musculus (Mouse), this protein is Integrin alpha-IIb (Itga2b).